The chain runs to 1575 residues: MAAAALLLGLALLAPRAAGAGMGACYDGAGRPQRCLPVFENAAFGRLAQASHTCGSPPEDFCPHVGAAGAGAHCQRCDAADPQRHHNASYLTDFHSQDESTWWQSPSMAFGVQYPTSVNITLRLGKAYEITYVRLKFHTSRPESFAIYKRSRADGPWEPYQFYSASCQKTYGRPEGQYLRPGEDERVAFCTSEFSDISPLSGGNVAFSTLEGRPSAYNFEESPGLQEWVTSTELLISLDRLNTFGDDIFKDPKVLQSYYYAVSDFSVGGRCKCNGHASECGPDVAGQLACRCQHNTTGTDCERCLPFFQDRPWARGTAEAAHECLPCNCSGRSEECTFDRELFRSTGHGGRCHHCRDHTAGPHCERCQENFYHWDPRMPCQPCDCQSAGSLHLQCDDTGTCACKPTVTGWKCDRCLPGFHSLSEGGCRPCTCNPAGSLDTCDPRSGRCPCKENVEGNLCDRCRPGTFNLQPHNPAGCSSCFCYGHSKVCASTAQFQVHHILSDFHQGAEGWWARSVGGSEHPPQWSPNGVLLSPEDEEELTAPEKFLGDQRFSYGQPLILTFRVPPGDSPLPVQLRLEGTGLALSLRHSSLSGPQDAGHPREVELRFHLQETSEDVAPPLPPFHFQRLLANLTSLRLRVSPGPSPAGPVFLTEVRLTSARPGLSPPASWVEICSCPTGYTGQFCESCAPGYKREMPQGGPYASCVPCTCNQHGTCDPNTGICVCSHHTEGPSCERCLPGFYGNPFAGQADDCQPCPCPGQSACTTIPESREVVCTHCPPGQRGRRCEVCDDGFFGDPLGLFGHPQPCHQCQCSGNVDPNAVGNCDPLSGHCLRCLHNTTGDHCEHCQEGFYGSALAPRPADKCMPCSCHPQGSVSEQMPCDPVTGQCSCLPHVTARDCSRCYPGFFDLQPGRGCRSCKCHPLGSQEDQCHPKTGQCTCRPGVTGQACDRCQLGFFGFSIKGCRACRCSPLGAASAQCHENGTCVCRPGFEGYKCDRCHDNFFLTADGTHCQQCPSCYALVKEEAAKLKARLTLTEGWLQGSDCGSPWGPLDILLGEAPRGDVYQGHHLLPGAREAFLEQMMSLEGAVKAAREQLQRLNKGARCAQAGSQKTCTQLADLEAVLESSEEEILHAAAILASLEIPQEGPSQPTKWSHLATEARALARSHRDTATKIAATAWRALLASNTSYALLWNLLEGRVALETQRDLEDRYQEVQAAQKALRTAVAEVLPEAESVLATVQQVGADTAPYLALLASPGALPQKSRAEDLGLKAKALEKTVASWQHMATEAARTLQTAAQATLRQTEPLTKLHQEARAALTQASSSVQAATVTVMGARTLLADLEGMKLQFPRPKDQAALQRKADSVSDRLLADTRKKTKQAERMLGNAAPLSSSAKKKGREAEVLAKDSAKLAKALLRERKQAHRRASRLTSQTQATLQQASQQVLASEARRQELEEAERVGAGLSEMEQQIRESRISLEKDIETLSELLARLGSLDTHQAPAQALNETQWALERLRLQLGSPGSLQRKLSLLEQESQQQELQIQGFESDLAEIRADKQNLEAILHSLPENCASWQ.

The first 19 residues, Met1 to Gly19, serve as a signal peptide directing secretion. The region spanning Arg31 to Arg270 is the Laminin N-terminal domain. 2 N-linked (GlcNAc...) asparagine glycosylation sites follow: Asn87 and Asn119. 16 cysteine pairs are disulfide-bonded: Cys271/Cys280, Cys273/Cys290, Cys292/Cys301, Cys304/Cys324, Cys327/Cys336, Cys329/Cys352, Cys355/Cys364, Cys367/Cys380, Cys383/Cys395, Cys385/Cys401, Cys403/Cys412, Cys415/Cys427, Cys430/Cys441, Cys432/Cys448, Cys450/Cys459, and Cys462/Cys477. 4 Laminin EGF-like domains span residues Cys271–Pro326, Cys327–Pro382, Cys383–Pro429, and Cys430–Ser479. An N-linked (GlcNAc...) asparagine glycan is attached at Asn295. N-linked (GlcNAc...) asparagine glycosylation is present at Asn328. The Laminin EGF-like 5; first part domain occupies Cys480–Cys489. The Laminin IV type A domain occupies His499–Ile672. Asn631 carries N-linked (GlcNAc...) asparagine glycosylation. In terms of domain architecture, Laminin EGF-like 5; second part spans Cys673–Pro706. Cystine bridges form between Cys707-Cys715, Cys709-Cys722, Cys724-Cys733, Cys736-Cys752, Cys755-Cys763, Cys757-Cys774, Cys777-Cys786, Cys789-Cys807, Cys810-Cys824, Cys812-Cys831, Cys834-Cys843, Cys846-Cys863, Cys866-Cys880, Cys868-Cys887, Cys889-Cys898, Cys901-Cys914, Cys917-Cys929, Cys919-Cys936, Cys938-Cys947, Cys950-Cys962, Cys965-Cys977, Cys967-Cys983, Cys985-Cys994, and Cys997-Cys1010. Laminin EGF-like domains are found at residues Cys707–Pro754, Cys755–Gln809, Cys810–Pro865, Cys866–Ser916, Cys917–Ala964, and Cys965–Cys1013. An N-linked (GlcNAc...) asparagine glycan is attached at Asn837. Asn980 carries an N-linked (GlcNAc...) asparagine glycan. Residues Pro1014–Gln1575 are domain II and I. A Cell attachment site motif is present at residues Arg1059–Asp1061. Residues Arg1073–Ala1134 are a coiled coil. Residue Asn1185 is glycosylated (N-linked (GlcNAc...) asparagine). A coiled-coil region spans residues Leu1201–Val1228. Residues Lys1378–Arg1399 are disordered. Coiled coils occupy residues Lys1410–Leu1492 and Gly1523–Leu1567.

Laminin is a complex glycoprotein, consisting of three different polypeptide chains (alpha, beta, gamma), which are bound to each other by disulfide bonds into a cross-shaped molecule comprising one long and three short arms with globules at each end. Gamma-3 is a subunit of laminin-12 (laminin-213), laminin-14 (laminin-423) and laminin-15 (laminin-523). Broadly expressed in: skin, heart, lung, and the reproductive tracts.

Its subcellular location is the secreted. The protein resides in the extracellular space. It localises to the extracellular matrix. It is found in the basement membrane. Functionally, binding to cells via a high affinity receptor, laminin is thought to mediate the attachment, migration and organization of cells into tissues during embryonic development by interacting with other extracellular matrix components. This is Laminin subunit gamma-3 (LAMC3) from Homo sapiens (Human).